The chain runs to 855 residues: Suppressor of tumorigenicity 14 protein homolog (855 aa).

Residues 1–21 are disordered; the sequence is MKSERARRGAGGSGDLGAGFK. Topologically, residues 1–55 are cytoplasmic; sequence MKSERARRGAGGSGDLGAGFKYTSRPENMNGCEEGVEFLPANNSSKVEKGGPRRW. At Ser-13 the chain carries Phosphoserine. The helical; Signal-anchor for type II membrane protein transmembrane segment at 56-76 threads the bilayer; that stretch reads VVLMAVLAAFLALSLLAGLLA. Residues 77-855 lie on the Extracellular side of the membrane; the sequence is WHFQDRNVRV…RDWIKAQIGV (779 aa). The SEA domain occupies 86–203; that stretch reads VQKIFNGYLS…TSVVAFPSDP (118 aa). Asn-109 carries N-linked (GlcNAc...) asparagine glycosylation. Residues Cys-214 and Cys-244 are joined by a disulfide bond. 2 consecutive CUB domains span residues 214–334 and 340–447; these read CSFA…FFQL and CGGY…FLSF. N-linked (GlcNAc...) asparagine glycosylation is found at Asn-302 and Asn-365. Cystine bridges form between Cys-340/Cys-366, Cys-397/Cys-410, Cys-453/Cys-464, Cys-459/Cys-477, Cys-471/Cys-486, Cys-488/Cys-501, Cys-496/Cys-514, Cys-508/Cys-523, Cys-525/Cys-537, Cys-532/Cys-550, Cys-544/Cys-559, Cys-567/Cys-579, Cys-574/Cys-593, Cys-587/Cys-602, and Cys-641/Cys-657. LDL-receptor class A domains follow at residues 452-487, 487-524, 524-560, and 566-603; these read PCPG…LDCK, KCNA…EGCS, SCPP…AKCQ, and PCTE…KDCD. N-linked (GlcNAc...) asparagine glycosylation occurs at Asn-489. One can recognise a Peptidase S1 domain in the interval 615–854; sequence VVGGENSDQG…FRDWIKAQIG (240 aa). Residues His-656 and Asp-711 each act as charge relay system in the active site. An N-linked (GlcNAc...) asparagine glycan is attached at Asn-772. 2 cysteine pairs are disulfide-bonded: Cys-776/Cys-790 and Cys-801/Cys-830. Ser-805 acts as the Charge relay system in catalysis.

This sequence belongs to the peptidase S1 family. In terms of assembly, interacts with CDCP1. May interact with TMEFF1.

The protein localises to the membrane. The catalysed reaction is Cleaves various synthetic substrates with Arg or Lys at the P1 position and prefers small side-chain amino acids, such as Ala and Gly, at the P2 position.. In terms of biological role, exhibits trypsin-like activity as defined by cleavage of synthetic substrates with Arg or Lys as the P1 site. Involved in the terminal differentiation of keratinocytes through prostasin (PRSS8) activation and filaggrin (FLG) processing. Proteolytically cleaves and therefore activates TMPRSS13. This Bos taurus (Bovine) protein is Suppressor of tumorigenicity 14 protein homolog (ST14).